Consider the following 103-residue polypeptide: Co-chaperonin GroES (103 aa).

The protein belongs to the GroES chaperonin family. As to quaternary structure, heptamer of 7 subunits arranged in a ring. Interacts with the chaperonin GroEL.

It localises to the cytoplasm. Its function is as follows. Together with the chaperonin GroEL, plays an essential role in assisting protein folding. The GroEL-GroES system forms a nano-cage that allows encapsulation of the non-native substrate proteins and provides a physical environment optimized to promote and accelerate protein folding. GroES binds to the apical surface of the GroEL ring, thereby capping the opening of the GroEL channel. The polypeptide is Co-chaperonin GroES (Prochlorococcus marinus subsp. pastoris (strain CCMP1986 / NIES-2087 / MED4)).